A 475-amino-acid chain; its full sequence is Transmembrane protein 44 (475 aa).

Topologically, residues 1 to 29 (MGEAPSPAPALWDWDYLDRCFARHRVCIS) are extracellular. A helical transmembrane segment spans residues 30 to 50 (FGLWICASSCWIAAHALLLYL). The Cytoplasmic portion of the chain corresponds to 51–61 (RCAQKPRQDQS). A helical transmembrane segment spans residues 62–82 (ALCAACCLLTSLCDTVGALLA). At 83–88 (RQLTIQ) the chain is on the extracellular side. The chain crosses the membrane as a helical span at residues 89–109 (VFTGAYLAAIDLVNFMFILFP). The Cytoplasmic segment spans residues 110 to 135 (VCGSKFKSNSDREARERKRRRQLRAS). The helical transmembrane segment at 136 to 156 (VFALALPLSLGPCWALWVAVP) threads the bilayer. Residues 157 to 179 (KASATIRGPQRRLLASLLQENTE) lie on the Extracellular side of the membrane. The helical transmembrane segment at 180–200 (ILGYLLGSVAAFGSWASRIPP) threads the bilayer. Residues 201 to 259 (LSRIAPPPTLGITTQHEIWRGQMSKPSQSPSRSPSGHWRAAAQRQVLGTEMCRGKTFPS) lie on the Cytoplasmic side of the membrane. The helical transmembrane segment at 260 to 280 (IHLWTRLLSALAGLLYASAIV) threads the bilayer. The Extracellular portion of the chain corresponds to 281 to 294 (AHDQHPEYLLRATP). A helical transmembrane segment spans residues 295-315 (WFLTSLGRAALDLAIIFLSCV). The Cytoplasmic segment spans residues 316 to 475 (MKSKMRQALG…VRTAHLSDDD (160 aa)). Residues 390 to 475 (SATRLPGDGQ…VRTAHLSDDD (86 aa)) form a disordered region. A compositionally biased stretch (low complexity) spans 424 to 436 (SSGSSSEVSSINS). Residues 464–475 (DSVRTAHLSDDD) show a composition bias toward basic and acidic residues. S465 bears the Phosphoserine mark.

The protein localises to the membrane. In Homo sapiens (Human), this protein is Transmembrane protein 44 (TMEM44).